We begin with the raw amino-acid sequence, 515 residues long: Bifunctional purine biosynthesis protein PurH (515 aa).

The MGS-like domain maps to 1–145 (MTKRVLISVS…KNHASVTVVV (145 aa)).

This sequence belongs to the PurH family.

It carries out the reaction (6R)-10-formyltetrahydrofolate + 5-amino-1-(5-phospho-beta-D-ribosyl)imidazole-4-carboxamide = 5-formamido-1-(5-phospho-D-ribosyl)imidazole-4-carboxamide + (6S)-5,6,7,8-tetrahydrofolate. The catalysed reaction is IMP + H2O = 5-formamido-1-(5-phospho-D-ribosyl)imidazole-4-carboxamide. The protein operates within purine metabolism; IMP biosynthesis via de novo pathway; 5-formamido-1-(5-phospho-D-ribosyl)imidazole-4-carboxamide from 5-amino-1-(5-phospho-D-ribosyl)imidazole-4-carboxamide (10-formyl THF route): step 1/1. It functions in the pathway purine metabolism; IMP biosynthesis via de novo pathway; IMP from 5-formamido-1-(5-phospho-D-ribosyl)imidazole-4-carboxamide: step 1/1. The protein is Bifunctional purine biosynthesis protein PurH of Streptococcus pneumoniae serotype 2 (strain D39 / NCTC 7466).